The chain runs to 210 residues: Thiamine-phosphate synthase (210 aa).

Residues 39–43 and asparagine 71 contribute to the 4-amino-2-methyl-5-(diphosphooxymethyl)pyrimidine site; that span reads QLREK. Aspartate 72 and aspartate 91 together coordinate Mg(2+). Serine 110 is a 4-amino-2-methyl-5-(diphosphooxymethyl)pyrimidine binding site. Residue 134–136 participates in 2-[(2R,5Z)-2-carboxy-4-methylthiazol-5(2H)-ylidene]ethyl phosphate binding; sequence TPT. 4-amino-2-methyl-5-(diphosphooxymethyl)pyrimidine is bound at residue lysine 137. Glycine 163 serves as a coordination point for 2-[(2R,5Z)-2-carboxy-4-methylthiazol-5(2H)-ylidene]ethyl phosphate.

This sequence belongs to the thiamine-phosphate synthase family. Mg(2+) serves as cofactor.

It carries out the reaction 2-[(2R,5Z)-2-carboxy-4-methylthiazol-5(2H)-ylidene]ethyl phosphate + 4-amino-2-methyl-5-(diphosphooxymethyl)pyrimidine + 2 H(+) = thiamine phosphate + CO2 + diphosphate. It catalyses the reaction 2-(2-carboxy-4-methylthiazol-5-yl)ethyl phosphate + 4-amino-2-methyl-5-(diphosphooxymethyl)pyrimidine + 2 H(+) = thiamine phosphate + CO2 + diphosphate. The enzyme catalyses 4-methyl-5-(2-phosphooxyethyl)-thiazole + 4-amino-2-methyl-5-(diphosphooxymethyl)pyrimidine + H(+) = thiamine phosphate + diphosphate. Its pathway is cofactor biosynthesis; thiamine diphosphate biosynthesis; thiamine phosphate from 4-amino-2-methyl-5-diphosphomethylpyrimidine and 4-methyl-5-(2-phosphoethyl)-thiazole: step 1/1. Functionally, condenses 4-methyl-5-(beta-hydroxyethyl)thiazole monophosphate (THZ-P) and 2-methyl-4-amino-5-hydroxymethyl pyrimidine pyrophosphate (HMP-PP) to form thiamine monophosphate (TMP). This Campylobacter jejuni subsp. jejuni serotype O:6 (strain 81116 / NCTC 11828) protein is Thiamine-phosphate synthase.